A 295-amino-acid chain; its full sequence is Pyridoxal 5'-phosphate synthase subunit PdxS (295 aa).

D-ribose 5-phosphate is bound at residue aspartate 25. The active-site Schiff-base intermediate with D-ribose 5-phosphate is lysine 82. Glycine 154 provides a ligand contact to D-ribose 5-phosphate. Arginine 166 lines the D-glyceraldehyde 3-phosphate pocket. D-ribose 5-phosphate-binding positions include glycine 215 and 236 to 237 (GS).

Belongs to the PdxS/SNZ family. In terms of assembly, in the presence of PdxT, forms a dodecamer of heterodimers.

It carries out the reaction aldehydo-D-ribose 5-phosphate + D-glyceraldehyde 3-phosphate + L-glutamine = pyridoxal 5'-phosphate + L-glutamate + phosphate + 3 H2O + H(+). It participates in cofactor biosynthesis; pyridoxal 5'-phosphate biosynthesis. In terms of biological role, catalyzes the formation of pyridoxal 5'-phosphate from ribose 5-phosphate (RBP), glyceraldehyde 3-phosphate (G3P) and ammonia. The ammonia is provided by the PdxT subunit. Can also use ribulose 5-phosphate and dihydroxyacetone phosphate as substrates, resulting from enzyme-catalyzed isomerization of RBP and G3P, respectively. The polypeptide is Pyridoxal 5'-phosphate synthase subunit PdxS (Listeria innocua serovar 6a (strain ATCC BAA-680 / CLIP 11262)).